A 122-amino-acid chain; its full sequence is Alkaline proteinase inhibitor (122 aa).

A signal peptide spans 1-25 (MPRFSHLIGCVWQVLFVSAGAQAMA). The disordered stretch occupies residues 101 to 122 (QKEGEYTGRTPSGADVTLQRTN).

The protein belongs to the protease inhibitor I38 family.

It localises to the periplasm. Inhibitor of the alkaline protease. The protein is Alkaline proteinase inhibitor (inh) of Pseudomonas tolaasii.